The sequence spans 314 residues: 4-hydroxy-3-methylbut-2-enyl diphosphate reductase (314 aa).

Residue Cys-12 participates in [4Fe-4S] cluster binding. (2E)-4-hydroxy-3-methylbut-2-enyl diphosphate is bound by residues His-41 and His-74. Residues His-41 and His-74 each coordinate dimethylallyl diphosphate. 2 residues coordinate isopentenyl diphosphate: His-41 and His-74. Cys-96 contributes to the [4Fe-4S] cluster binding site. His-124 contacts (2E)-4-hydroxy-3-methylbut-2-enyl diphosphate. His-124 serves as a coordination point for dimethylallyl diphosphate. His-124 contributes to the isopentenyl diphosphate binding site. Catalysis depends on Glu-126, which acts as the Proton donor. (2E)-4-hydroxy-3-methylbut-2-enyl diphosphate is bound at residue Thr-167. Cys-197 lines the [4Fe-4S] cluster pocket. Ser-225, Ser-226, Asn-227, and Ser-269 together coordinate (2E)-4-hydroxy-3-methylbut-2-enyl diphosphate. Residues Ser-225, Ser-226, Asn-227, and Ser-269 each coordinate dimethylallyl diphosphate. Ser-225, Ser-226, Asn-227, and Ser-269 together coordinate isopentenyl diphosphate.

The protein belongs to the IspH family. Requires [4Fe-4S] cluster as cofactor.

It catalyses the reaction isopentenyl diphosphate + 2 oxidized [2Fe-2S]-[ferredoxin] + H2O = (2E)-4-hydroxy-3-methylbut-2-enyl diphosphate + 2 reduced [2Fe-2S]-[ferredoxin] + 2 H(+). The enzyme catalyses dimethylallyl diphosphate + 2 oxidized [2Fe-2S]-[ferredoxin] + H2O = (2E)-4-hydroxy-3-methylbut-2-enyl diphosphate + 2 reduced [2Fe-2S]-[ferredoxin] + 2 H(+). The protein operates within isoprenoid biosynthesis; dimethylallyl diphosphate biosynthesis; dimethylallyl diphosphate from (2E)-4-hydroxy-3-methylbutenyl diphosphate: step 1/1. Its pathway is isoprenoid biosynthesis; isopentenyl diphosphate biosynthesis via DXP pathway; isopentenyl diphosphate from 1-deoxy-D-xylulose 5-phosphate: step 6/6. In terms of biological role, catalyzes the conversion of 1-hydroxy-2-methyl-2-(E)-butenyl 4-diphosphate (HMBPP) into a mixture of isopentenyl diphosphate (IPP) and dimethylallyl diphosphate (DMAPP). Acts in the terminal step of the DOXP/MEP pathway for isoprenoid precursor biosynthesis. This is 4-hydroxy-3-methylbut-2-enyl diphosphate reductase from Psychromonas ingrahamii (strain DSM 17664 / CCUG 51855 / 37).